Consider the following 396-residue polypeptide: RNA-binding motif protein, X chromosome (396 aa).

Position 1 is an N-acetylmethionine; in Heterogeneous nuclear ribonucleoprotein G; alternate (Met-1). An N-acetylvaline; in Heterogeneous nuclear ribonucleoprotein G, N-terminally processed modification is found at Val-2. The RRM domain occupies 8 to 86; sequence GKLFIGGLNL…KAIKVAQATK (79 aa). Residue Lys-22 forms a Glycyl lysine isopeptide (Lys-Gly) (interchain with G-Cter in SUMO2) linkage. The residue at position 30 (Lys-30) is an N6-acetyllysine. Glycyl lysine isopeptide (Lys-Gly) (interchain with G-Cter in SUMO2) cross-links involve residues Lys-80 and Lys-86. Positions 84-396 are disordered; it reads ATKPAFESGR…RGGGGGRSRY (313 aa). Ser-91 is subject to Phosphoserine. Omega-N-methylarginine is present on residues Arg-122, Arg-141, Arg-162, and Arg-170. A compositionally biased stretch (pro residues) spans 148–162; that stretch reads RGPPPPRRAGPPPKR. 2 stretches are compositionally biased toward basic and acidic residues: residues 185–205 and 241–275; these read RGRDGYEGPPRRDPPPPRRDP and YTYRDYGHSSARDECPSRGYGDRDGYGGRDRDYAD. The necessary for the association to nascent RNAPII transcripts and nuclear localization stretch occupies residues 186-236; sequence GRDGYEGPPRRDPPPPRRDPYLGSREGGYSPRDGYSSRDYSSARDARDFAP. Over residues 323-332 the composition is skewed to gly residues; it reads YGGGRDGYAG. Residues 334-350 are compositionally biased toward basic and acidic residues; sequence RSERYSGGRDRVGRADR. Phosphoserine is present on residues Ser-335 and Ser-355. The tract at residues 336–396 is necessary for RNA-binding; it reads ERYSGGRDRV…RGGGGGRSRY (61 aa).

In terms of assembly, homomultimer. Found in the supraspliceosome complex. Identified in the spliceosome C complex. Forms a complex with ILF2, ILF3, YLPM1, KHDRBS1, NCOA5 and PPP1CA. Interacts with CLK2, KHDRBS2, KHDRBS3, SAFB/SAFB1, TRA2B and YTHDC1. Interacts with ERAP1; the interaction is RNA-independent. O-glycosylated. Post-translationally, arg-185 is dimethylated, probably to asymmetric dimethylarginine.

Its subcellular location is the nucleus. Its function is as follows. RNA-binding protein that plays several role in the regulation of pre- and post-transcriptional processes. Implicated in tissue-specific regulation of gene transcription and alternative splicing of several pre-mRNAs. Binds to and stimulates transcription from the tumor suppressor TXNIP gene promoter; may thus be involved in tumor suppression. When associated with SAFB, binds to and stimulates transcription from the SREBF1 promoter. Associates with nascent mRNAs transcribed by RNA polymerase II. Component of the supraspliceosome complex that regulates pre-mRNA alternative splice site selection. Can either activate or suppress exon inclusion; acts additively with TRA2B to promote exon 7 inclusion of the survival motor neuron SMN2. Represses the splicing of MAPT/Tau exon 10. Binds preferentially to single-stranded 5'-CC[A/C]-rich RNA sequence motifs localized in a single-stranded conformation; probably binds RNA as a homodimer. Binds non-specifically to pre-mRNAs. Also plays a role in the cytoplasmic TNFR1 trafficking pathways; promotes both the IL-1-beta-mediated inducible proteolytic cleavage of TNFR1 ectodomains and the release of TNFR1 exosome-like vesicles to the extracellular compartment. This Bos taurus (Bovine) protein is RNA-binding motif protein, X chromosome (RBMX).